The chain runs to 539 residues: Putative dimethylaniline monooxygenase [N-oxide-forming] 6 (539 aa).

FAD contacts are provided by residues 9–13 (GAGVS), glutamate 32, 40–41 (LW), and 61–62 (NS). An NADP(+)-binding site is contributed by 195–198 (SGSD). Residues 518–538 (FYNLLKMLSFPLLLLAVTLTF) form a helical membrane-spanning segment.

Belongs to the FMO family. It depends on FAD as a cofactor.

It is found in the microsome membrane. Its subcellular location is the endoplasmic reticulum membrane. It carries out the reaction N,N-dimethylaniline + NADPH + O2 + H(+) = N,N-dimethylaniline N-oxide + NADP(+) + H2O. Functionally, it is probable that this protein is only produced in very small quantity or not at all as the gene coding for it seems to be unable to produce full-length transcripts. The protein is Putative dimethylaniline monooxygenase [N-oxide-forming] 6 (FMO6P) of Homo sapiens (Human).